The sequence spans 199 residues: Recombination protein RecR (199 aa).

The segment at 56-71 (CATCGNVAQEELCNIC) adopts a C4-type zinc-finger fold. The 96-residue stretch at 79–174 (SVICVVEEPK…KVTRLASGLP (96 aa)) folds into the Toprim domain.

It belongs to the RecR family.

May play a role in DNA repair. It seems to be involved in an RecBC-independent recombinational process of DNA repair. It may act with RecF and RecO. The protein is Recombination protein RecR of Streptomyces avermitilis (strain ATCC 31267 / DSM 46492 / JCM 5070 / NBRC 14893 / NCIMB 12804 / NRRL 8165 / MA-4680).